Here is a 220-residue protein sequence, read N- to C-terminus: UPF0758 protein CKO_05095 (220 aa).

One can recognise an MPN domain in the interval 98-220; the sequence is ALLSPEMTRE…YVSFAERGWI (123 aa). Histidine 169, histidine 171, and aspartate 182 together coordinate Zn(2+). Positions 169–182 match the JAMM motif motif; that stretch reads HNHPSGCAEPSKAD.

The protein belongs to the UPF0758 family. YicR subfamily.

The sequence is that of UPF0758 protein CKO_05095 from Citrobacter koseri (strain ATCC BAA-895 / CDC 4225-83 / SGSC4696).